The chain runs to 214 residues: Adenylate kinase (214 aa).

ATP is bound at residue 10 to 15 (GTGKGT). The segment at 30 to 59 (STGDILRENIQKKNTIGKKIHNILKNGELV) is NMP. Residues T31, R36, 57-59 (ELV), 85-88 (GFPR), and Q92 each bind AMP. The tract at residues 122–159 (GRRVHTPSGRIYNINYNPPREEGKDDLTQEKLTIREDD) is LID. ATP-binding positions include R123 and 132–133 (IY). AMP-binding residues include R156 and R167. Residue Q200 participates in ATP binding.

This sequence belongs to the adenylate kinase family. Monomer.

The protein resides in the cytoplasm. It carries out the reaction AMP + ATP = 2 ADP. Its pathway is purine metabolism; AMP biosynthesis via salvage pathway; AMP from ADP: step 1/1. In terms of biological role, catalyzes the reversible transfer of the terminal phosphate group between ATP and AMP. Plays an important role in cellular energy homeostasis and in adenine nucleotide metabolism. The chain is Adenylate kinase from Buchnera aphidicola subsp. Schizaphis graminum (strain Sg).